Consider the following 443-residue polypeptide: Phosphoribosylamine--glycine ligase (443 aa).

Residues 109-324 form the ATP-grasp domain; it reads RNLFKKYNIK…FLDVCFGISN (216 aa). 140-202 contacts ATP; sequence MTGLGKDVVV…EEKLVGVEFT (63 aa). The Mg(2+) site is built by glutamine 282, glutamate 294, and asparagine 296. Mn(2+) contacts are provided by glutamine 282, glutamate 294, and asparagine 296.

It belongs to the GARS family. It depends on Mg(2+) as a cofactor. Mn(2+) is required as a cofactor.

It catalyses the reaction 5-phospho-beta-D-ribosylamine + glycine + ATP = N(1)-(5-phospho-beta-D-ribosyl)glycinamide + ADP + phosphate + H(+). It functions in the pathway purine metabolism; IMP biosynthesis via de novo pathway; N(1)-(5-phospho-D-ribosyl)glycinamide from 5-phospho-alpha-D-ribose 1-diphosphate: step 2/2. The protein is Phosphoribosylamine--glycine ligase of Methanococcus vannielii (strain ATCC 35089 / DSM 1224 / JCM 13029 / OCM 148 / SB).